A 197-amino-acid chain; its full sequence is Phosphoheptose isomerase (197 aa).

The SIS domain maps to 36–197 (MVNALLNEGK…IDSQLFGSEE (162 aa)). 51–53 (NGG) contacts substrate. Positions 60 and 64 each coordinate Zn(2+). Substrate-binding positions include glutamate 64, 93–94 (ND), 119–121 (STS), serine 124, and glutamine 174. Positions 174 and 182 each coordinate Zn(2+).

Belongs to the SIS family. GmhA subfamily. In terms of assembly, homotetramer. Zn(2+) serves as cofactor.

It localises to the cytoplasm. The enzyme catalyses 2 D-sedoheptulose 7-phosphate = D-glycero-alpha-D-manno-heptose 7-phosphate + D-glycero-beta-D-manno-heptose 7-phosphate. Its pathway is carbohydrate biosynthesis; D-glycero-D-manno-heptose 7-phosphate biosynthesis; D-glycero-alpha-D-manno-heptose 7-phosphate and D-glycero-beta-D-manno-heptose 7-phosphate from sedoheptulose 7-phosphate: step 1/1. Functionally, catalyzes the isomerization of sedoheptulose 7-phosphate in D-glycero-D-manno-heptose 7-phosphate. The chain is Phosphoheptose isomerase from Pseudomonas fluorescens (strain SBW25).